Here is a 427-residue protein sequence, read N- to C-terminus: Phosphatidylserine decarboxylase proenzyme 1, mitochondrial (427 aa).

The N-terminal 77 residues, 1 to 77 (MRSYLRFSDR…RRFVYKLDQA (77 aa)), are a transit peptide targeting the mitochondrion. Topologically, residues 78 to 88 (VTAALGPNGRY) are mitochondrial matrix. The helical transmembrane segment at 89-107 (IAMVGMTASAVLLTFHYKF) threads the bilayer. Over 108–427 (REVIAATDNV…TEDERLFAFY (320 aa)) the chain is Mitochondrial intermembrane. Active-site charge relay system; for autoendoproteolytic cleavage activity residues include D210, H268, and S379. The active-site Schiff-base intermediate with substrate; via pyruvic acid; for decarboxylase activity is the S379. S379 carries the post-translational modification Pyruvic acid (Ser); by autocatalysis.

This sequence belongs to the phosphatidylserine decarboxylase family. PSD-B subfamily. Eukaryotic type I sub-subfamily. As to quaternary structure, heterodimer of a large membrane-associated beta subunit and a small pyruvoyl-containing alpha subunit. Pyruvate serves as cofactor. In terms of processing, is synthesized initially as an inactive proenzyme. Formation of the active enzyme involves a self-maturation process in which the active site pyruvoyl group is generated from an internal serine residue via an autocatalytic post-translational modification. Two non-identical subunits are generated from the proenzyme in this reaction, and the pyruvate is formed at the N-terminus of the alpha chain, which is derived from the carboxyl end of the proenzyme. The autoendoproteolytic cleavage occurs by a canonical serine protease mechanism, in which the side chain hydroxyl group of the serine supplies its oxygen atom to form the C-terminus of the beta chain, while the remainder of the serine residue undergoes an oxidative deamination to produce ammonia and the pyruvoyl prosthetic group on the alpha chain. During this reaction, the Ser that is part of the protease active site of the proenzyme becomes the pyruvoyl prosthetic group, which constitutes an essential element of the active site of the mature decarboxylase.

The protein resides in the mitochondrion. Its subcellular location is the mitochondrion inner membrane. It carries out the reaction a 1,2-diacyl-sn-glycero-3-phospho-L-serine + H(+) = a 1,2-diacyl-sn-glycero-3-phosphoethanolamine + CO2. Its pathway is phospholipid metabolism; phosphatidylethanolamine biosynthesis; phosphatidylethanolamine from CDP-diacylglycerol: step 2/2. Catalyzes the formation of phosphatidylethanolamine (PtdEtn) from phosphatidylserine (PtdSer). Plays a central role in phospholipid metabolism and in the interorganelle trafficking of phosphatidylserine. The polypeptide is Phosphatidylserine decarboxylase proenzyme 1, mitochondrial (Toxoplasma gondii (strain ATCC 50853 / GT1)).